Here is a 108-residue protein sequence, read N- to C-terminus: Probable 4-amino-4-deoxy-L-arabinose-phosphoundecaprenol flippase subunit ArnE (108 aa).

The next 3 helical transmembrane spans lie at 36–56, 58–78, and 85–105; these read SLWLALACLGSGLLIWLLVLQ, LDVGIAYPMLGVNFVLITLAG, and PVDVRHWLGIALILVGVFQLG.

It belongs to the ArnE family. Heterodimer of ArnE and ArnF.

It localises to the cell inner membrane. It functions in the pathway bacterial outer membrane biogenesis; lipopolysaccharide biosynthesis. Functionally, translocates 4-amino-4-deoxy-L-arabinose-phosphoundecaprenol (alpha-L-Ara4N-phosphoundecaprenol) from the cytoplasmic to the periplasmic side of the inner membrane. The polypeptide is Probable 4-amino-4-deoxy-L-arabinose-phosphoundecaprenol flippase subunit ArnE (Pseudomonas syringae pv. syringae (strain B728a)).